The sequence spans 864 residues: 3-O-alpha-D-mannopyranosyl-alpha-D-mannopyranose xylosylphosphotransferase (864 aa).

Pro residues predominate over residues 1-14 (MPPTALPPLRPPAQ). Residues 1–47 (MPPTALPPLRPPAQPYDSYSSSLSPSSPRFHPASAPHGRRAPSPSRL) form a disordered region. The Cytoplasmic portion of the chain corresponds to 1-81 (MPPTALPPLR…HIRPHLTPRT (81 aa)). Residues 15–28 (PYDSYSSSLSPSSP) show a composition bias toward low complexity. Residues 82-102 (LTPLLLWTLALWLVHHFLFPF) traverse the membrane as a helical segment. Residues 103–864 (SSPLAALSRP…WDPVKDRYHD (762 aa)) are Lumenal-facing. Asn-199 and Asn-301 each carry an N-linked (GlcNAc...) asparagine glycan.

This sequence belongs to the XPT1 family. Mn(2+) serves as cofactor.

It localises to the golgi apparatus membrane. It carries out the reaction 3-alpha-D-mannopyranosyl-alpha-D-mannopyranose + UDP-alpha-D-xylose = 3-O-(6-O-alpha-D-xylosylphospho-alpha-D-mannopyranosyl)-alpha-D-mannopyranose + UMP + H(+). Its function is as follows. Xylosylphosphotransferase that is specific for UDP-xylose as a donor and mannose as an acceptor to form a xylose-alpha-1-phosphate-6-mannose linkage. Functions in the O-glycosylation of proteins en route through the secretory pathway. The protein is 3-O-alpha-D-mannopyranosyl-alpha-D-mannopyranose xylosylphosphotransferase (XPT1) of Cryptococcus neoformans var. neoformans serotype D (strain B-3501A) (Filobasidiella neoformans).